The following is a 328-amino-acid chain: Alanine racemase (328 aa).

Catalysis depends on K33, which acts as the Proton acceptor; specific for D-alanine. N6-(pyridoxal phosphate)lysine is present on K33. Residue R118 participates in substrate binding. The active-site Proton acceptor; specific for L-alanine is the Y237. Residue M283 coordinates substrate.

It belongs to the alanine racemase family. Pyridoxal 5'-phosphate is required as a cofactor.

The catalysed reaction is L-alanine = D-alanine. It functions in the pathway amino-acid biosynthesis; D-alanine biosynthesis; D-alanine from L-alanine: step 1/1. Catalyzes the interconversion of L-alanine and D-alanine. May also act on other amino acids. The protein is Alanine racemase (alr) of Campylobacter jejuni subsp. doylei (strain ATCC BAA-1458 / RM4099 / 269.97).